A 356-amino-acid chain; its full sequence is Protein RecA (356 aa).

68–75 (GQESSGKT) contributes to the ATP binding site.

Belongs to the RecA family.

It localises to the cytoplasm. Can catalyze the hydrolysis of ATP in the presence of single-stranded DNA, the ATP-dependent uptake of single-stranded DNA by duplex DNA, and the ATP-dependent hybridization of homologous single-stranded DNAs. It interacts with LexA causing its activation and leading to its autocatalytic cleavage. This chain is Protein RecA, found in Thermotoga maritima (strain ATCC 43589 / DSM 3109 / JCM 10099 / NBRC 100826 / MSB8).